The chain runs to 619 residues: Schlafen family member 12-like (619 aa).

A helical transmembrane segment spans residues 598–618 (IFLFVCLFRFCLFVCLFVFFL).

The protein belongs to the Schlafen family.

Its subcellular location is the membrane. The polypeptide is Schlafen family member 12-like (SLFN12L) (Pongo abelii (Sumatran orangutan)).